The following is an 85-amino-acid chain: Large ribosomal subunit protein bL27 (85 aa).

The tract at residues 1–25 (MAHKKGVGSSRNGRDSNPKMLGVKR) is disordered.

It belongs to the bacterial ribosomal protein bL27 family.

This Roseiflexus castenholzii (strain DSM 13941 / HLO8) protein is Large ribosomal subunit protein bL27.